The sequence spans 275 residues: AA9 family lytic polysaccharide monooxygenase D (275 aa).

The first 17 residues, M1–A17, serve as a signal peptide directing secretion. Cu(2+)-binding residues include H18 and H101. C67 and C189 are disulfide-bonded. H176 provides a ligand contact to O2. Residue Y186 coordinates Cu(2+). N220 carries an N-linked (GlcNAc...) asparagine glycan.

The protein belongs to the polysaccharide monooxygenase AA9 family. It depends on Cu(2+) as a cofactor.

It is found in the secreted. It catalyses the reaction [(1-&gt;4)-beta-D-glucosyl]n+m + reduced acceptor + O2 = 4-dehydro-beta-D-glucosyl-[(1-&gt;4)-beta-D-glucosyl]n-1 + [(1-&gt;4)-beta-D-glucosyl]m + acceptor + H2O.. Its function is as follows. Lytic polysaccharide monooxygenase (LPMO) that depolymerizes crystalline and amorphous polysaccharides via the oxidation of scissile alpha- or beta-(1-4)-glycosidic bonds, yielding C1 or C4 oxidation products. Catalysis by LPMOs requires the reduction of the active-site copper from Cu(II) to Cu(I) by a reducing agent and H(2)O(2) or O(2) as a cosubstrate. The protein is AA9 family lytic polysaccharide monooxygenase D of Aspergillus tamarii.